The following is a 61-amino-acid chain: Cobrotoxin-c (61 aa).

4 disulfides stabilise this stretch: cysteine 3/cysteine 23, cysteine 17/cysteine 40, cysteine 42/cysteine 53, and cysteine 54/cysteine 59.

The protein belongs to the three-finger toxin family. Short-chain subfamily. Type I alpha-neurotoxin sub-subfamily. As to expression, expressed by the venom gland.

Its subcellular location is the secreted. Produces peripheral paralysis by blocking neuromuscular transmission at the postsynaptic site. Binds to the nicotinic acetylcholine receptor. The polypeptide is Cobrotoxin-c (Naja kaouthia (Monocled cobra)).